Consider the following 88-residue polypeptide: Small ribosomal subunit protein uS17 (88 aa).

It belongs to the universal ribosomal protein uS17 family. As to quaternary structure, part of the 30S ribosomal subunit.

Functionally, one of the primary rRNA binding proteins, it binds specifically to the 5'-end of 16S ribosomal RNA. In Methylorubrum extorquens (strain PA1) (Methylobacterium extorquens), this protein is Small ribosomal subunit protein uS17.